Reading from the N-terminus, the 359-residue chain is UDP-N-acetylglucosamine--N-acetylmuramyl-(pentapeptide) pyrophosphoryl-undecaprenol N-acetylglucosamine transferase (359 aa).

UDP-N-acetyl-alpha-D-glucosamine is bound by residues 15 to 17 (TGG), N127, R166, S191, I245, 264 to 269 (ALTVSE), and Q290.

Belongs to the glycosyltransferase 28 family. MurG subfamily.

The protein resides in the cell inner membrane. It catalyses the reaction di-trans,octa-cis-undecaprenyl diphospho-N-acetyl-alpha-D-muramoyl-L-alanyl-D-glutamyl-meso-2,6-diaminopimeloyl-D-alanyl-D-alanine + UDP-N-acetyl-alpha-D-glucosamine = di-trans,octa-cis-undecaprenyl diphospho-[N-acetyl-alpha-D-glucosaminyl-(1-&gt;4)]-N-acetyl-alpha-D-muramoyl-L-alanyl-D-glutamyl-meso-2,6-diaminopimeloyl-D-alanyl-D-alanine + UDP + H(+). Its pathway is cell wall biogenesis; peptidoglycan biosynthesis. Cell wall formation. Catalyzes the transfer of a GlcNAc subunit on undecaprenyl-pyrophosphoryl-MurNAc-pentapeptide (lipid intermediate I) to form undecaprenyl-pyrophosphoryl-MurNAc-(pentapeptide)GlcNAc (lipid intermediate II). This chain is UDP-N-acetylglucosamine--N-acetylmuramyl-(pentapeptide) pyrophosphoryl-undecaprenol N-acetylglucosamine transferase, found in Pseudomonas putida (strain ATCC 47054 / DSM 6125 / CFBP 8728 / NCIMB 11950 / KT2440).